A 447-amino-acid polypeptide reads, in one-letter code: Phosphoglucosamine mutase (447 aa).

Residue serine 103 is the Phosphoserine intermediate of the active site. Residues serine 103, aspartate 242, aspartate 244, and aspartate 246 each contribute to the Mg(2+) site. Serine 103 is subject to Phosphoserine.

This sequence belongs to the phosphohexose mutase family. Mg(2+) serves as cofactor. In terms of processing, activated by phosphorylation.

It carries out the reaction alpha-D-glucosamine 1-phosphate = D-glucosamine 6-phosphate. In terms of biological role, catalyzes the conversion of glucosamine-6-phosphate to glucosamine-1-phosphate. The chain is Phosphoglucosamine mutase from Cereibacter sphaeroides (strain ATCC 17025 / ATH 2.4.3) (Rhodobacter sphaeroides).